The following is a 705-amino-acid chain: MSQPLTTRPTVTGISIIPFRQPPPLCSFLFVIVLFVATFYTLHHPDAVTPPLLFSRNAYNALRLRRLFLSSASNATISSYLRELTRHPHLAGTKPSLDTLHYVFNHFQSLGLETHVAEYEALLSYPTHISVTASFSNTTTLEFDLNDVPGDSPVVRPYHAYSPSGSAQGNVVFVNHGEERDYHALESIGVSVKGCVVLARKGENLGRGAIVKIAEAKGALGVLIYAENDGGGFGGIERGTVMRGIGDPVSPGWPGVVGGEKLSLDDELVTRRFPKIPSLPLSLRNAEIILASLGGARAPLEWRNSGRVGPGQRVGPGRMVINMTFQGEMKMKKINNVVVTIRGSEEADRYVILGNHRDAWTYGAVDPNSGTSALLDISRRFALLLKSGWRPRRTILLCSWDAEEFGMIGSTEWIEENVLNLGASAVAYLNVDCAVQGSGFFAGATPQLDGLLVDVLKLVQDPDAVGLTVEETFKSQNNIIQRLSRVDSDFSGFLHHAGIPSIDMYYGADYPVYHTAFDSYDWMIHNADPLFHRHVAMAGIWGLLGILLADEPLIPFDYISYADQLQAHRDKLSKLLEGKVSVNPLSMAIQEFSLVAKEAADEAKKLKGKSYSKNDVAAAAKRRELNDRLMLVERGFLDAEGIKGKEWFKHLVYGPAAEPESKLGFFPGIADAIAMNASEGIIEHEIWRVARAIQRASKALKGGFT.

At 1-24 (MSQPLTTRPTVTGISIIPFRQPPP) the chain is on the cytoplasmic side. Residues 25-42 (LCSFLFVIVLFVATFYTL) traverse the membrane as a helical; Signal-anchor for type II membrane protein segment. At 43-705 (HHPDAVTPPL…ASKALKGGFT (663 aa)) the chain is on the extracellular side. Residues asparagine 74, asparagine 137, and asparagine 322 are each glycosylated (N-linked (GlcNAc...) asparagine). The catalytic stretch occupies residues 255 to 548 (GVVGGEKLSL…GIWGLLGILL (294 aa)). Zn(2+)-binding residues include histidine 356 and aspartate 366. The active-site Nucleophile is glutamate 403. Residues glutamate 404, aspartate 432, and histidine 514 each contribute to the Zn(2+) site. Asparagine 676 is a glycosylation site (N-linked (GlcNAc...) asparagine).

Belongs to the peptidase M28 family. M28B subfamily. Requires Zn(2+) as cofactor. As to expression, expressed in all plant parts. Highest levels in the bolt stem, inflorescence, root and silique. Low level in leaves.

The protein localises to the endoplasmic reticulum membrane. It carries out the reaction Release of an unsubstituted, C-terminal glutamyl residue, typically from Ac-Asp-Glu or folylpoly-gamma-glutamates.. Functionally, may modulate the level of one or more small signaling molecules that have a role in regulating meristem function. May play a role in balancing and restricting the meristem-promoting activity of auxin signaling. Involved in ethylene and giberellin (GA) signaling pathways or in a parallel pathway controlling cell and hypocotyl elongation and cellular organization. Involved in abscisic acid (ABA) signaling pathway. Plays a negative role in ABA-mediated seed germination and seedling development. Acts in association with LAMP1 to suppress ectopic stem cell niche formation in the shoot apical meristem (SAM) independently of cytokinin signaling pathway. Modulates responses to ABA, oxidative stress and abotic stress. Acts as a negative regulator of the ABA signaling pathway to modulate freezing and drought stress responses. Mediates carbon and amino acid metabolism. May be involved in the acquisition and/or maintenance of seed dormancy. Involved in the regulation of response to heat shock and plant defense. The chain is Probable glutamate carboxypeptidase AMP1 from Arabidopsis thaliana (Mouse-ear cress).